Here is a 165-residue protein sequence, read N- to C-terminus: U11/U12 small nuclear ribonucleoprotein 25 kDa protein (165 aa).

The Ubiquitin-like domain maps to 52–137 (MRLSVVKLDG…IRNNSQVTFM (86 aa)). The disordered stretch occupies residues 145-165 (RGRHSKRKKHRLFRSLHKTSS).

In terms of assembly, component of the U11/U12 snRNPs that are part of the U12-type spliceosome.

The protein resides in the nucleus. This chain is U11/U12 small nuclear ribonucleoprotein 25 kDa protein (SNRNP25), found in Arabidopsis thaliana (Mouse-ear cress).